The chain runs to 202 residues: MSNPLRVGVGGPVGSGKTALLEWLCREMQQHYSVAAITNDIYTKEDQRILTASGALPAERIMGVETGGCPHTAIREDASMNLAAVEDMQLRFADLELIFIESGGDNLAATFSPELADLTLYVIDVAAGEKIPRKGGPGITRSDLLVINKTDLAPLVGADLAVMEQDTLRMRGSRPFVFTNLKQGDGVAAIIQFLVEKGGLGV.

GTP is bound at residue 11–18 (GPVGSGKT).

The protein belongs to the SIMIBI class G3E GTPase family. UreG subfamily. Homodimer. UreD, UreF and UreG form a complex that acts as a GTP-hydrolysis-dependent molecular chaperone, activating the urease apoprotein by helping to assemble the nickel containing metallocenter of UreC. The UreE protein probably delivers the nickel.

The protein localises to the cytoplasm. Facilitates the functional incorporation of the urease nickel metallocenter. This process requires GTP hydrolysis, probably effectuated by UreG. The sequence is that of Urease accessory protein UreG from Magnetococcus marinus (strain ATCC BAA-1437 / JCM 17883 / MC-1).